The sequence spans 329 residues: Glycerol-3-phosphate dehydrogenase [NAD(P)+] (329 aa).

Residues Ser-10, Trp-11, Arg-31, and Lys-105 each contribute to the NADPH site. Lys-105, Gly-134, and Ser-136 together coordinate sn-glycerol 3-phosphate. Ala-138 provides a ligand contact to NADPH. Positions 189, 242, 252, 253, and 254 each coordinate sn-glycerol 3-phosphate. Lys-189 serves as the catalytic Proton acceptor. Arg-253 provides a ligand contact to NADPH. Positions 277 and 279 each coordinate NADPH.

The protein belongs to the NAD-dependent glycerol-3-phosphate dehydrogenase family.

The protein resides in the cytoplasm. The enzyme catalyses sn-glycerol 3-phosphate + NAD(+) = dihydroxyacetone phosphate + NADH + H(+). It carries out the reaction sn-glycerol 3-phosphate + NADP(+) = dihydroxyacetone phosphate + NADPH + H(+). It functions in the pathway membrane lipid metabolism; glycerophospholipid metabolism. Its function is as follows. Catalyzes the reduction of the glycolytic intermediate dihydroxyacetone phosphate (DHAP) to sn-glycerol 3-phosphate (G3P), the key precursor for phospholipid synthesis. The protein is Glycerol-3-phosphate dehydrogenase [NAD(P)+] of Neisseria gonorrhoeae (strain ATCC 700825 / FA 1090).